An 89-amino-acid polypeptide reads, in one-letter code: Small ribosomal subunit protein uS15 (89 aa).

This sequence belongs to the universal ribosomal protein uS15 family. Part of the 30S ribosomal subunit. Forms a bridge to the 50S subunit in the 70S ribosome, contacting the 23S rRNA.

Functionally, one of the primary rRNA binding proteins, it binds directly to 16S rRNA where it helps nucleate assembly of the platform of the 30S subunit by binding and bridging several RNA helices of the 16S rRNA. In terms of biological role, forms an intersubunit bridge (bridge B4) with the 23S rRNA of the 50S subunit in the ribosome. The polypeptide is Small ribosomal subunit protein uS15 (Zymomonas mobilis subsp. mobilis (strain ATCC 31821 / ZM4 / CP4)).